We begin with the raw amino-acid sequence, 626 residues long: MATLNRDQQIEEIINLEAILNLPKGTEHFVSDLHGEFEAFDHILRNGSGRIREKVQFLFKQELNAHQMDELCFIIYYPEEKLTLLENESALSYEWWLLTIRRLVEIVRSSSMKYTRSKVRKALPETYGYILEELIYQYDETTTKNGYYQQIIEKIILLGEAKRFVTELAYLIQRLIIDHLHVIGDIYDRGPAPDKIMDRLMSYHSLDIQLGNHDMIWLAAYSGSLACLANVVRICARYGNLDLLEERYAIDLTALKKFSLETYKENPAFAPKKNPYRALTEAEKQVAMRVQQAIAIIQEKLEGQIIGRRPDFNLAHRLRLDKIQGETITFDECRYTLINSCFQTVSEEQPYQLTREEKQIIDDLLTQFQSSPRLTKHMRFLMEKASLYLVYNQNLLIHGCLPLNADGTFQAYTFKGHSYSGKALVDFFQEMLEEAYAQPASTDDYATDCLWYLWCGEGSSLFGKRAMKTFERYFLAEKETHYEEKNPYYSLRDTVEVCERILDEFEVTGENRHIINGHTPVKRTKGESPIKANGTLLVIDGGFSKSYQTITGIAGYTLLYNSFGLQLTAHKSFSSKETAILNNQDIHSIKQVIDRPLQRLLVKDTTIGKELLKQSQALQKQMKQNQ.

The protein belongs to the FBPase class 3 family. The cofactor is Mn(2+).

The catalysed reaction is beta-D-fructose 1,6-bisphosphate + H2O = beta-D-fructose 6-phosphate + phosphate. It participates in carbohydrate biosynthesis; gluconeogenesis. The protein is Fructose-1,6-bisphosphatase class 3 of Enterococcus faecalis (strain ATCC 700802 / V583).